Here is a 286-residue protein sequence, read N- to C-terminus: CDP-diacylglycerol--serine O-phosphatidyltransferase (286 aa).

6 helical membrane-spanning segments follow: residues 15-35 (ILPS…IKFA), 74-94 (IDSL…LYVS), 95-115 (MLSK…CVVL), 135-155 (EFFV…LLAL), 167-187 (GWFL…GIPM), and 207-227 (LAIC…VIII).

The protein belongs to the CDP-alcohol phosphatidyltransferase class-I family.

The protein resides in the cell membrane. It catalyses the reaction a CDP-1,2-diacyl-sn-glycerol + L-serine = a 1,2-diacyl-sn-glycero-3-phospho-L-serine + CMP + H(+). In Mycobacterium tuberculosis (strain ATCC 25618 / H37Rv), this protein is CDP-diacylglycerol--serine O-phosphatidyltransferase (pssA).